We begin with the raw amino-acid sequence, 345 residues long: tRNA N6-adenosine threonylcarbamoyltransferase (345 aa).

Residues H117 and H121 each contribute to the Fe cation site. Substrate-binding positions include L140–G144, D173, G186, and N279. A Fe cation-binding site is contributed by D307.

It belongs to the KAE1 / TsaD family. Fe(2+) serves as cofactor.

Its subcellular location is the cytoplasm. The enzyme catalyses L-threonylcarbamoyladenylate + adenosine(37) in tRNA = N(6)-L-threonylcarbamoyladenosine(37) in tRNA + AMP + H(+). Its function is as follows. Required for the formation of a threonylcarbamoyl group on adenosine at position 37 (t(6)A37) in tRNAs that read codons beginning with adenine. Is involved in the transfer of the threonylcarbamoyl moiety of threonylcarbamoyl-AMP (TC-AMP) to the N6 group of A37, together with TsaE and TsaB. TsaD likely plays a direct catalytic role in this reaction. This chain is tRNA N6-adenosine threonylcarbamoyltransferase, found in Verminephrobacter eiseniae (strain EF01-2).